We begin with the raw amino-acid sequence, 1131 residues long: DNA polymerase II large subunit (1131 aa).

Belongs to the archaeal DNA polymerase II family. In terms of assembly, heterodimer of a large subunit and a small subunit.

It carries out the reaction DNA(n) + a 2'-deoxyribonucleoside 5'-triphosphate = DNA(n+1) + diphosphate. It catalyses the reaction Exonucleolytic cleavage in the 3'- to 5'-direction to yield nucleoside 5'-phosphates.. Its function is as follows. Possesses two activities: a DNA synthesis (polymerase) and an exonucleolytic activity that degrades single-stranded DNA in the 3'- to 5'-direction. Has a template-primer preference which is characteristic of a replicative DNA polymerase. The protein is DNA polymerase II large subunit of Methanococcus vannielii (strain ATCC 35089 / DSM 1224 / JCM 13029 / OCM 148 / SB).